A 144-amino-acid polypeptide reads, in one-letter code: Noggin (144 aa).

An N-terminal signal peptide occupies residues 1 to 4; it reads GGGG. 4 disulfides stabilise this stretch: Cys-67/Cys-104, Cys-90/Cys-140, Cys-96/Cys-142, and Cys-119/Cys-127.

The protein belongs to the noggin family. Homodimer. Interacts with GDF5; inhibits chondrocyte differentiation. Prominently expressed in the CNS. High levels found in mitral and tufted cells in the olfactory bulb, piriform cortex of the brain and Purkinje cells in the cerebellum. Low level expression seen in the lung, skeletal muscle and skin.

The protein localises to the secreted. In terms of biological role, essential for cartilage morphogenesis and joint formation. Inhibitor of bone morphogenetic proteins (BMP) signaling which is required for growth and patterning of the neural tube and somite. Inhibits chondrocyte differentiation through its interaction with GDF5 and, probably, GDF6. In Rattus norvegicus (Rat), this protein is Noggin (Nog).